We begin with the raw amino-acid sequence, 309 residues long: MKKENQSFNLDFILLGVTSQQEQNNVFFVIFLCIYPITLTGNLLIILAICADIRLHNPMYFLLANLSLVDIIFSSVTIPKVLANHLLGSKFISFGGCLMQMYFMIALAKADSYTLAAMAYDRAVAISCPLHYTTIMSPRSCILLIAGSWVIGNTSALPHTLLTASLSFCGNQEVANFYCDIMPLLKLSCSDVHFNVKMMYLGVGVFSLPLLCIIVSYVQVFSTVFQVPSTKSLFKAFCTCGSHLTVVFLYYGTTMGMYFRPLTSYSPKDAVITVMYVAVTPALNPFIYSLRNWDMKAALQKLFSKRISS.

Topologically, residues 1–25 (MKKENQSFNLDFILLGVTSQQEQNN) are extracellular. Asparagine 5 is a glycosylation site (N-linked (GlcNAc...) asparagine). Residues 26-49 (VFFVIFLCIYPITLTGNLLIILAI) form a helical membrane-spanning segment. Residues 50–57 (CADIRLHN) lie on the Cytoplasmic side of the membrane. The chain crosses the membrane as a helical span at residues 58-79 (PMYFLLANLSLVDIIFSSVTIP). The Extracellular portion of the chain corresponds to 80–100 (KVLANHLLGSKFISFGGCLMQ). Residues cysteine 97 and cysteine 189 are joined by a disulfide bond. A helical transmembrane segment spans residues 101-120 (MYFMIALAKADSYTLAAMAY). Residues 121–139 (DRAVAISCPLHYTTIMSPR) are Cytoplasmic-facing. A helical transmembrane segment spans residues 140 to 158 (SCILLIAGSWVIGNTSALP). The Extracellular segment spans residues 159–195 (HTLLTASLSFCGNQEVANFYCDIMPLLKLSCSDVHFN). Residues 196–218 (VKMMYLGVGVFSLPLLCIIVSYV) traverse the membrane as a helical segment. Topologically, residues 219–235 (QVFSTVFQVPSTKSLFK) are cytoplasmic. A helical membrane pass occupies residues 236-258 (AFCTCGSHLTVVFLYYGTTMGMY). The Extracellular portion of the chain corresponds to 259-270 (FRPLTSYSPKDA). The helical transmembrane segment at 271-290 (VITVMYVAVTPALNPFIYSL) threads the bilayer. Topologically, residues 291 to 309 (RNWDMKAALQKLFSKRISS) are cytoplasmic.

This sequence belongs to the G-protein coupled receptor 1 family.

It is found in the cell membrane. Its function is as follows. Odorant receptor. This is Olfactory receptor 1A2 (OR1A2) from Homo sapiens (Human).